We begin with the raw amino-acid sequence, 360 residues long: Phospho-N-acetylmuramoyl-pentapeptide-transferase (360 aa).

The Periplasmic portion of the chain corresponds to 1 to 25 (MLVWLAEHLVKYYSGFNVFSYLTFR). Residues 26–46 (AIVSLLTALFISLWMGPRMIA) traverse the membrane as a helical segment. Residues 47 to 71 (RLQKLSFGQVVRNDGPESHFSKRGT) are Cytoplasmic-facing. The chain crosses the membrane as a helical span at residues 72-92 (PTMGGIMILTSIVISVLLWAY). Residue P93 is a topological domain, periplasmic. The chain crosses the membrane as a helical span at residues 94–114 (SNPYVWCVLVVLIGYGIIGFV). Over 115–131 (DDYRKVVRKDTKGLIAR) the chain is Cytoplasmic. A helical membrane pass occupies residues 132–152 (WKYFWMSVIALGVAFALYLVG). Residues 153 to 167 (KDTPATQLVVPFFKD) are Periplasmic-facing. Residues 168–188 (VMPQLGLFYILLSYFVIVGTG) traverse the membrane as a helical segment. At 189-198 (NAVNLTDGLD) the chain is on the cytoplasmic side. A helical transmembrane segment spans residues 199 to 219 (GLAIMPTVFVAAGFALVAWAT). At 220-235 (GNMNFANYLHIPYLRH) the chain is on the periplasmic side. The chain crosses the membrane as a helical span at residues 236–256 (AGELVIVCTAIVGAGLGFLWF). Topologically, residues 257–262 (NTYPAQ) are cytoplasmic. A helical membrane pass occupies residues 263 to 283 (VFMGDVGSLALGGALGIIAVL). At 284–287 (LRQE) the chain is on the periplasmic side. A helical transmembrane segment spans residues 288-308 (FLLVIMGGVFVVETLSVILQV). Residues 309–337 (GSFKLRGQRIFRMAPIHHHYELKGWPEPR) are Cytoplasmic-facing. The helical transmembrane segment at 338–358 (VIVRFWIISLMLVLIGLATLK) threads the bilayer. Residues 359–360 (VR) lie on the Periplasmic side of the membrane.

Belongs to the glycosyltransferase 4 family. MraY subfamily. The cofactor is Mg(2+).

The protein resides in the cell inner membrane. It carries out the reaction UDP-N-acetyl-alpha-D-muramoyl-L-alanyl-gamma-D-glutamyl-meso-2,6-diaminopimeloyl-D-alanyl-D-alanine + di-trans,octa-cis-undecaprenyl phosphate = di-trans,octa-cis-undecaprenyl diphospho-N-acetyl-alpha-D-muramoyl-L-alanyl-D-glutamyl-meso-2,6-diaminopimeloyl-D-alanyl-D-alanine + UMP. It participates in cell wall biogenesis; peptidoglycan biosynthesis. Functionally, catalyzes the initial step of the lipid cycle reactions in the biosynthesis of the cell wall peptidoglycan: transfers peptidoglycan precursor phospho-MurNAc-pentapeptide from UDP-MurNAc-pentapeptide onto the lipid carrier undecaprenyl phosphate, yielding undecaprenyl-pyrophosphoryl-MurNAc-pentapeptide, known as lipid I. This chain is Phospho-N-acetylmuramoyl-pentapeptide-transferase, found in Salmonella gallinarum (strain 287/91 / NCTC 13346).